Here is a 250-residue protein sequence, read N- to C-terminus: uncharacterized protein (250 aa).

This is an uncharacterized protein from Mycobacterium tuberculosis (strain CDC 1551 / Oshkosh).